The following is a 693-amino-acid chain: Elongation factor G (693 aa).

The tr-type G domain occupies 9–283 (ERVRNIGIIA…AVCDYLPSPV (275 aa)). GTP contacts are provided by residues 18 to 25 (AHIDAGKT), 82 to 86 (DTPGH), and 136 to 139 (NKMD).

It belongs to the TRAFAC class translation factor GTPase superfamily. Classic translation factor GTPase family. EF-G/EF-2 subfamily.

It localises to the cytoplasm. In terms of biological role, catalyzes the GTP-dependent ribosomal translocation step during translation elongation. During this step, the ribosome changes from the pre-translocational (PRE) to the post-translocational (POST) state as the newly formed A-site-bound peptidyl-tRNA and P-site-bound deacylated tRNA move to the P and E sites, respectively. Catalyzes the coordinated movement of the two tRNA molecules, the mRNA and conformational changes in the ribosome. In Dehalococcoides mccartyi (strain ATCC BAA-2266 / KCTC 15142 / 195) (Dehalococcoides ethenogenes (strain 195)), this protein is Elongation factor G.